We begin with the raw amino-acid sequence, 121 residues long: Small ribosomal subunit protein uS13 (121 aa).

The segment at 95 to 121 (GLPVRGQKTKTNARTRKGKRKTVGAKS) is disordered.

Belongs to the universal ribosomal protein uS13 family. As to quaternary structure, part of the 30S ribosomal subunit. Forms a loose heterodimer with protein S19. Forms two bridges to the 50S subunit in the 70S ribosome.

Located at the top of the head of the 30S subunit, it contacts several helices of the 16S rRNA. In the 70S ribosome it contacts the 23S rRNA (bridge B1a) and protein L5 of the 50S subunit (bridge B1b), connecting the 2 subunits; these bridges are implicated in subunit movement. Contacts the tRNAs in the A and P-sites. This Campylobacter jejuni subsp. jejuni serotype O:23/36 (strain 81-176) protein is Small ribosomal subunit protein uS13.